Here is a 315-residue protein sequence, read N- to C-terminus: Putative purine nucleoside phosphorylase (315 aa).

Phosphate contacts are provided by residues Ser49, His81, 103 to 105 (RYH), and Ala135. Glu220 is a binding site for a purine D-ribonucleoside. Ser239 lines the phosphate pocket. Asn262 contributes to the a purine D-ribonucleoside binding site.

This sequence belongs to the PNP/MTAP phosphorylase family.

It is found in the cytoplasm. The protein localises to the nucleus. It catalyses the reaction a purine D-ribonucleoside + phosphate = a purine nucleobase + alpha-D-ribose 1-phosphate. Its pathway is purine metabolism; purine nucleoside salvage. In terms of biological role, the purine nucleoside phosphorylases catalyze the phosphorolytic breakdown of the N-glycosidic bond in the beta-(deoxy)ribonucleoside molecules, with the formation of the corresponding free purine bases and pentose-1-phosphate. Cleaves guanosine and inosine. The sequence is that of Putative purine nucleoside phosphorylase from Schizosaccharomyces pombe (strain 972 / ATCC 24843) (Fission yeast).